Consider the following 137-residue polypeptide: Large ribosomal subunit protein uL16 (137 aa).

Belongs to the universal ribosomal protein uL16 family. Part of the 50S ribosomal subunit.

Binds 23S rRNA and is also seen to make contacts with the A and possibly P site tRNAs. The chain is Large ribosomal subunit protein uL16 from Xylella fastidiosa (strain M23).